Here is a 599-residue protein sequence, read N- to C-terminus: Protein linkin (599 aa).

Positions 1–19 (MKKILPIIWLINLVSGSLS) are cleaved as a signal peptide. The Extracellular portion of the chain corresponds to 20 to 553 (LEKKAPDLLG…SRLYVTPSAL (534 aa)). 5 N-linked (GlcNAc...) asparagine glycosylation sites follow: Asn50, Asn117, Asn163, Asn361, and Asn378. Residues 554–574 (IVQSLAVIALVCCMLLMVVVF) traverse the membrane as a helical segment. At 575 to 599 (LHYREKKEDRYERQQQSHRFHFDAM) the chain is on the cytoplasmic side.

It belongs to the TIP family. Expressed in all somatic gonadal cells including distal tip cells, anchor cell, uterine precursor cells and spermatheca precursor cells of the hermaphrodite. Also expressed in the pharynx, pharyngeal-intestinal valve, intestine, excretory cell and canal, seam cells, a subset of hypodermal cells, vulval precursor cells of the hermaphrodite and hook precursor cells in the male.

The protein localises to the apical cell membrane. The protein resides in the lateral cell membrane. Its function is as follows. Probable cell adhesion protein involved in gonadal cell migration. The polypeptide is Protein linkin (Caenorhabditis elegans).